Reading from the N-terminus, the 138-residue chain is Basic leucine zipper 8 (138 aa).

A disordered region spans residues 30–67 (NLPATSDDSSRTAEDNERKRRRKVSNRESARRSRMRKQ). Residues 37-47 (DSSRTAEDNER) show a composition bias toward basic and acidic residues. The bZIP domain occupies 45-108 (NERKRRRKVS…EKVIEENMKL (64 aa)). Residues 47-68 (RKRRRKVSNRESARRSRMRKQR) form a basic motif region. The Nuclear localization signal motif lies at 48-55 (KRRRKVSN). The leucine-zipper stretch occupies residues 73–87 (LWSMLVQLINKNKSL).

Belongs to the bZIP family. Homodimer.

It is found in the nucleus. The polypeptide is Basic leucine zipper 8 (Arabidopsis thaliana (Mouse-ear cress)).